Here is a 195-residue protein sequence, read N- to C-terminus: dITP/XTP pyrophosphatase (195 aa).

9–14 (TNNQGK) contacts substrate. Glutamate 39 and aspartate 68 together coordinate Mg(2+). Aspartate 68 serves as the catalytic Proton acceptor. Substrate is bound by residues serine 69, 146–149 (FGYD), lysine 169, and 174–175 (HR).

The protein belongs to the HAM1 NTPase family. In terms of assembly, homodimer. Requires Mg(2+) as cofactor.

The catalysed reaction is XTP + H2O = XMP + diphosphate + H(+). It catalyses the reaction dITP + H2O = dIMP + diphosphate + H(+). The enzyme catalyses ITP + H2O = IMP + diphosphate + H(+). Functionally, pyrophosphatase that catalyzes the hydrolysis of nucleoside triphosphates to their monophosphate derivatives, with a high preference for the non-canonical purine nucleotides XTP (xanthosine triphosphate), dITP (deoxyinosine triphosphate) and ITP. Seems to function as a house-cleaning enzyme that removes non-canonical purine nucleotides from the nucleotide pool, thus preventing their incorporation into DNA/RNA and avoiding chromosomal lesions. This Gloeobacter violaceus (strain ATCC 29082 / PCC 7421) protein is dITP/XTP pyrophosphatase.